Consider the following 307-residue polypeptide: sn-1-specific diacylglycerol lipase ABHD11 (307 aa).

Residues 1 to 34 (MLRWARAWRVPRGVLGASSPRRLAVPVTFCSSRS) constitute a mitochondrion transit peptide. Lysine 79 carries the N6-succinyllysine modification. The active-site Charge relay system is the serine 133. Position 196 is an N6-succinyllysine (lysine 196). Residues aspartate 229 and histidine 288 each act as charge relay system in the active site.

Belongs to the AB hydrolase superfamily. In terms of assembly, interacts with OGDH and DLST; this interaction maintains the functional lipoylation of the 2-oxoglutarate dehydrogenase complex. In terms of processing, phosphorylated. Expressed in white adipose tissues.

It is found in the mitochondrion. The protein localises to the mitochondrion matrix. The enzyme catalyses 1-octadecanoyl-2-(5Z,8Z,11Z,14Z-eicosatetraenoyl)-sn-glycerol + H2O = 2-(5Z,8Z,11Z,14Z-eicosatetraenoyl)-glycerol + octadecanoate + H(+). It catalyses the reaction a 1,2-diacyl-sn-glycerol + H2O = a 2-acylglycerol + a fatty acid + H(+). It carries out the reaction a 1,3-diacyl-sn-glycerol + H2O = a 1-acyl-sn-glycerol + a fatty acid + H(+). The catalysed reaction is 1-octadecanoyl-2-(9Z-octadecenoyl)-sn-glycerol + H2O = 2-(9Z-octadecenoyl)-glycerol + octadecanoate + H(+). The enzyme catalyses 1-octadecanoyl-2-(4Z,7Z,10Z,13Z,16Z,19Z-docosahexaenoyl)-sn-glycerol + H2O = 2-(4Z,7Z,10Z,13Z,16Z,19Z-docosahexaenoyl)-glycerol + octadecanoate + H(+). It catalyses the reaction 1,2-didecanoylglycerol + H2O = decanoylglycerol + decanoate + H(+). Catalyzes the hydrolysis of diacylglycerol in vitro and may function as a key regulator in lipid metabolism, namely by regulating the intracellular levels of diacylglycerol. 1,2-diacyl-sn-glycerols are the preferred substrate over 1,3-diacyl-sn-glycerols. The enzyme hydrolyzes stearate in preference to palmitate from the sn-1 position of 1,2-diacyl-sn-glycerols. Maintains the functional lipoylation of the 2-oxoglutarate dehydrogenase complex (OGDHc) through its interaction with the OGDHc by preventing the formation of lipoyl adducts. In addition, is also required for the expansion and differentiation of embryonic stem cells (ESCs). This Mus musculus (Mouse) protein is sn-1-specific diacylglycerol lipase ABHD11.